A 301-amino-acid chain; its full sequence is Probable porphobilinogen deaminase (301 aa).

C241 carries the post-translational modification S-(dipyrrolylmethanemethyl)cysteine.

The protein belongs to the HMBS family. Requires dipyrromethane as cofactor.

It catalyses the reaction 4 porphobilinogen + H2O = hydroxymethylbilane + 4 NH4(+). It participates in porphyrin-containing compound metabolism; protoporphyrin-IX biosynthesis; coproporphyrinogen-III from 5-aminolevulinate: step 2/4. Its function is as follows. Tetrapolymerization of the monopyrrole PBG into the hydroxymethylbilane pre-uroporphyrinogen in several discrete steps. The polypeptide is Probable porphobilinogen deaminase (Pyrobaculum islandicum (strain DSM 4184 / JCM 9189 / GEO3)).